The primary structure comprises 944 residues: Calcium-transporting ATPase type 2C member 2 (944 aa).

Topologically, residues methionine 1–tyrosine 104 are cytoplasmic. The interval valine 69–valine 93 is interaction with ORAI1. The helical transmembrane segment at leucine 105 to leucine 125 threads the bilayer. Over threonine 126–lysine 127 the chain is Extracellular. The helical transmembrane segment at glutamate 128–isoleucine 148 threads the bilayer. Over glutamine 149–serine 229 the chain is Cytoplasmic. A helical transmembrane segment spans residues proline 230 to valine 250. Over glutamine 251–lysine 291 the chain is Extracellular. Phosphothreonine is present on threonine 262. Residue serine 266 is modified to Phosphoserine. A helical transmembrane segment spans residues leucine 292–tryptophan 312. The Cytoplasmic portion of the chain corresponds to valine 313–alanine 329. Ca(2+) is bound by residues valine 330, alanine 331, isoleucine 333, and glutamate 335. The helical transmembrane segment at valine 330 to leucine 350 threads the bilayer. At arginine 351 to serine 748 the chain is on the extracellular side. Aspartate 377 acts as the 4-aspartylphosphate intermediate in catalysis. Mg(2+)-binding residues include aspartate 672 and aspartate 676. The chain crosses the membrane as a helical span at residues threonine 749–methionine 769. Ca(2+) contacts are provided by asparagine 766 and aspartate 770. Residues aspartate 770–alanine 802 lie on the Cytoplasmic side of the membrane. Residues leucine 803–tryptophan 823 traverse the membrane as a helical segment. The Extracellular segment spans residues arginine 824–arginine 835. The helical transmembrane segment at threonine 836–leucine 853 threads the bilayer. Residues serine 854–methionine 872 are Cytoplasmic-facing. Residues phenylalanine 873–leucine 893 traverse the membrane as a helical segment. The Extracellular portion of the chain corresponds to glutamine 894–serine 903. The chain crosses the membrane as a helical span at residues alanine 904–leucine 924. The Cytoplasmic segment spans residues lysine 925–valine 944.

Belongs to the cation transport ATPase (P-type) (TC 3.A.3) family. Type IIA subfamily. As to quaternary structure, interacts (via N-terminus) with ORAI1 (via N- and C-termini); this interaction regulates Ca(2+) influx at the plasma membrane.

The protein localises to the golgi apparatus. Its subcellular location is the trans-Golgi network membrane. It localises to the cell membrane. The protein resides in the basolateral cell membrane. It carries out the reaction Ca(2+)(in) + ATP + H2O = Ca(2+)(out) + ADP + phosphate + H(+). It catalyses the reaction Mn(2+)(in) + ATP + H2O = Mn(2+)(out) + ADP + phosphate + H(+). Its function is as follows. ATP-driven pump that supplies the Golgi apparatus with Ca(2+) and Mn(2+) ions, both essential cofactors for processing and trafficking of newly synthesized proteins in the secretory pathway. Within a catalytic cycle, acquires Ca(2+) or Mn(2+) ions on the cytoplasmic side of the membrane and delivers them to the lumenal side. The transfer of ions across the membrane is coupled to ATP hydrolysis and is associated with a transient phosphorylation that shifts the pump conformation from inward-facing to outward-facing state. Induces Ca(2+) influx independently of its ATP-driven pump function. At the basolateral membrane of mammary epithelial cells, interacts with Ca(2+) channel ORAI1 and mediates Ca(2+) entry independently of the Ca(2+) content of endoplasmic reticulum or Golgi stores. May facilitate transepithelial transport of large quantities of Ca(2+) for milk secretion via activation of Ca(2+) influx channels at the plasma membrane and active Ca(2+) transport at the Golgi apparatus. The sequence is that of Calcium-transporting ATPase type 2C member 2 (Atp2c2) from Rattus norvegicus (Rat).